A 271-amino-acid polypeptide reads, in one-letter code: Cytosolic Fe-S cluster assembly factor NUBP2 (271 aa).

Residue Met1 is modified to N-acetylmethionine. ATP is bound at residue 22–29 (GKGGVGKS). Cys196 and Cys199 together coordinate [4Fe-4S] cluster.

It belongs to the Mrp/NBP35 ATP-binding proteins family. NUBP2/CFD1 subfamily. As to quaternary structure, heterotetramer of 2 NUBP1 and 2 NUBP2 chains. Interacts with KIFC1. Interacts with NUBP1. The cofactor is [4Fe-4S] cluster. Widely expressed with highest expression in skeletal muscle.

The protein localises to the nucleus. Its subcellular location is the cytoplasm. It localises to the cytoskeleton. The protein resides in the microtubule organizing center. It is found in the centrosome. The protein localises to the cilium axoneme. Its subcellular location is the centriole. Its function is as follows. Component of the cytosolic iron-sulfur (Fe/S) protein assembly (CIA) machinery. Required for maturation of extramitochondrial Fe-S proteins. The NUBP1-NUBP2 heterotetramer forms a Fe-S scaffold complex, mediating the de novo assembly of an Fe-S cluster and its transfer to target apoproteins. Negatively regulates cilium formation and structure. The chain is Cytosolic Fe-S cluster assembly factor NUBP2 from Homo sapiens (Human).